Reading from the N-terminus, the 358-residue chain is 3-dehydroquinate synthase (358 aa).

NAD(+) contacts are provided by residues 69–74 (DGEAHK), 103–107 (GVIGD), 127–128 (TT), Lys140, Lys149, and 167–170 (CLRT). The Zn(2+) site is built by Glu182, His245, and His262.

The protein belongs to the sugar phosphate cyclases superfamily. Dehydroquinate synthase family. Requires Co(2+) as cofactor. It depends on Zn(2+) as a cofactor. NAD(+) serves as cofactor.

The protein resides in the cytoplasm. It catalyses the reaction 7-phospho-2-dehydro-3-deoxy-D-arabino-heptonate = 3-dehydroquinate + phosphate. The protein operates within metabolic intermediate biosynthesis; chorismate biosynthesis; chorismate from D-erythrose 4-phosphate and phosphoenolpyruvate: step 2/7. Catalyzes the conversion of 3-deoxy-D-arabino-heptulosonate 7-phosphate (DAHP) to dehydroquinate (DHQ). This Tolumonas auensis (strain DSM 9187 / NBRC 110442 / TA 4) protein is 3-dehydroquinate synthase.